Consider the following 238-residue polypeptide: Alpha-tubulin N-acetyltransferase (238 aa).

One can recognise an N-acetyltransferase domain in the interval 1 to 196; the sequence is MEFDFDISQS…NNFVVFEDLF (196 aa). Acetyl-CoA contacts are provided by residues 129–142 and 165–174; these read FYVH…GNGK and SFKFLSFLQK.

Belongs to the acetyltransferase ATAT1 family.

It catalyses the reaction L-lysyl-[alpha-tubulin] + acetyl-CoA = N(6)-acetyl-L-lysyl-[alpha-tubulin] + CoA + H(+). Functionally, specifically acetylates 'Lys-40' in alpha-tubulin on the lumenal side of microtubules. Promotes microtubule destabilization and accelerates microtubule dynamics; this activity may be independent of acetylation activity. Acetylates alpha-tubulin with a slow enzymatic rate, due to a catalytic site that is not optimized for acetyl transfer. Enters the microtubule through each end and diffuses quickly throughout the lumen of microtubules. Acetylates only long/old microtubules because of its slow acetylation rate since it does not have time to act on dynamically unstable microtubules before the enzyme is released. The sequence is that of Alpha-tubulin N-acetyltransferase from Trichoplax adhaerens (Trichoplax reptans).